A 179-amino-acid chain; its full sequence is ADP-ribosylation factor-like protein 5A (179 aa).

G2 carries the N-myristoyl glycine lipid modification. GTP contacts are provided by residues 23-30, 66-70, 125-128, and A159; these read GLDNAGKT, DIGGQ, and NKQD.

This sequence belongs to the small GTPase superfamily. Arf family.

In terms of biological role, lacks ADP-ribosylation enhancing activity. The polypeptide is ADP-ribosylation factor-like protein 5A (Arl5a) (Mus musculus (Mouse)).